A 362-amino-acid polypeptide reads, in one-letter code: Probable S-adenosylmethionine-dependent methyltransferase At5g37990 (362 aa).

S-adenosyl-L-homocysteine contacts are provided by Tyr19, Cys66, Asn71, Asp107, Ser136, and Phe137. Residues Asn175, Glu261, and Phe263 each coordinate Mg(2+).

It belongs to the methyltransferase superfamily. Type-7 methyltransferase family. Homodimer. It depends on Mg(2+) as a cofactor.

The protein is Probable S-adenosylmethionine-dependent methyltransferase At5g37990 of Arabidopsis thaliana (Mouse-ear cress).